A 367-amino-acid polypeptide reads, in one-letter code: uncharacterized protein (367 aa).

The 231-residue stretch at 4-234 folds into the ABC transporter domain; the sequence is LTFEHVKKSY…PANLFVAGFI (231 aa). Residue 36–43 coordinates ATP; the sequence is GPSGCGKS.

It belongs to the ABC transporter superfamily.

This is an uncharacterized protein from Bacillus subtilis (strain 168).